Reading from the N-terminus, the 220-residue chain is Octanoyltransferase (220 aa).

The BPL/LPL catalytic domain occupies 29-217; sequence GRAPEMIWLL…CFEETFGPLP (189 aa). Residues 68–75, 148–150, and 161–163 contribute to the substrate site; these read RGGQYTYH, AIG, and GLS. C179 acts as the Acyl-thioester intermediate in catalysis.

Belongs to the LipB family.

Its subcellular location is the cytoplasm. The enzyme catalyses octanoyl-[ACP] + L-lysyl-[protein] = N(6)-octanoyl-L-lysyl-[protein] + holo-[ACP] + H(+). The protein operates within protein modification; protein lipoylation via endogenous pathway; protein N(6)-(lipoyl)lysine from octanoyl-[acyl-carrier-protein]: step 1/2. Functionally, catalyzes the transfer of endogenously produced octanoic acid from octanoyl-acyl-carrier-protein onto the lipoyl domains of lipoate-dependent enzymes. Lipoyl-ACP can also act as a substrate although octanoyl-ACP is likely to be the physiological substrate. This Dinoroseobacter shibae (strain DSM 16493 / NCIMB 14021 / DFL 12) protein is Octanoyltransferase.